We begin with the raw amino-acid sequence, 357 residues long: Protein RecA (357 aa).

67–74 (GPESSGKT) provides a ligand contact to ATP. The disordered stretch occupies residues 333–357 (NELTPATAGNSHDEDAFADEGNEEF). The segment covering 348–357 (AFADEGNEEF) has biased composition (acidic residues).

It belongs to the RecA family.

The protein localises to the cytoplasm. Its function is as follows. Can catalyze the hydrolysis of ATP in the presence of single-stranded DNA, the ATP-dependent uptake of single-stranded DNA by duplex DNA, and the ATP-dependent hybridization of homologous single-stranded DNAs. It interacts with LexA causing its activation and leading to its autocatalytic cleavage. This Pectobacterium carotovorum subsp. carotovorum (strain PC1) protein is Protein RecA.